The primary structure comprises 378 residues: Cytochrome b (378 aa).

4 consecutive transmembrane segments (helical) span residues 35 to 55, 79 to 101, 114 to 134, and 180 to 200; these read FGSL…FLAM, WIIR…CHIG, TWIM…LGYV, and FFSL…LHIF. Heme b-binding residues include histidine 85 and histidine 99. Positions 184 and 198 each coordinate heme b. Position 203 (histidine 203) interacts with a ubiquinone. The next 4 helical transmembrane spans lie at 226–246, 290–310, 326–346, and 350–370; these read YSAK…FISF, LGGV…PLTH, FFWL…QPVC, and VMCS…CGPL.

Belongs to the cytochrome b family. In terms of assembly, the main subunits of complex b-c1 are: cytochrome b, cytochrome c1 and the Rieske protein. Heme b serves as cofactor.

The protein resides in the mitochondrion inner membrane. Functionally, component of the ubiquinol-cytochrome c reductase complex (complex III or cytochrome b-c1 complex) that is part of the mitochondrial respiratory chain. The b-c1 complex mediates electron transfer from ubiquinol to cytochrome c. Contributes to the generation of a proton gradient across the mitochondrial membrane that is then used for ATP synthesis. The protein is Cytochrome b (mt:Cyt-b) of Paraspadella gotoi (Arrow worm).